The sequence spans 100 residues: Double-stranded DNA-binding protein (100 aa).

Residues 1-19 mediate DNA binding; sequence MRKMMQREVTYTTAQLARM.

Homodimer. Homomultimer. Binds to double-stranded DNA giving rise to multimeric nucleoprotein complexes.

In terms of biological role, histone-like nucleoprotein that binds to the viral dsDNA and responsible for wrapping and condensing the viral DNA about 4-fold. Forms a nucleoprotein complex in which the DNA adopts a right-handed toroidal conformation winding around a protein core. Binding specificity for the viral genome is based on supercoiling. The formation of the nucleoprotein complex at the genome ends, for which the binding affinity is highest, activates the initiation of viral DNA replication. The binding of p6 would recruit the complex formed by the TP and the DNA polymerase to the origin. Protein p6 is also involved in the early to late transcription switch. This chain is Double-stranded DNA-binding protein, found in Bacillus phage Nf (Bacteriophage Nf).